The chain runs to 380 residues: Cytochrome b (380 aa).

A run of 4 helical transmembrane segments spans residues 34–54, 78–99, 114–134, and 179–199; these read FGSL…FLAM, WLLR…YMHI, WNIG…GYVL, and FFAF…VHLL. The heme b site is built by H84 and H98. Residues H183 and H197 each contribute to the heme b site. H202 serves as a coordination point for a ubiquinone. The next 4 membrane-spanning stretches (helical) occupy residues 227–247, 289–309, 321–341, and 348–368; these read YKDV…ALFS, LGGV…PFVH, LAQV…WLGG, and YIFL…LFIP.

Belongs to the cytochrome b family. As to quaternary structure, the cytochrome bc1 complex contains 3 respiratory subunits (MT-CYB, CYC1 and UQCRFS1), 2 core proteins (UQCRC1 and UQCRC2) and probably 6 low-molecular weight proteins. Heme b is required as a cofactor.

The protein localises to the mitochondrion inner membrane. Component of the ubiquinol-cytochrome c reductase complex (complex III or cytochrome b-c1 complex) that is part of the mitochondrial respiratory chain. The b-c1 complex mediates electron transfer from ubiquinol to cytochrome c. Contributes to the generation of a proton gradient across the mitochondrial membrane that is then used for ATP synthesis. The chain is Cytochrome b (MT-CYB) from Branchiostoma lanceolatum (Common lancelet).